A 123-amino-acid chain; its full sequence is MSPSPFKGQTGLKRILNATGYSLAGFLAAFRGEAAFRQLVLLNVVLIPVAFLLDVSRGERALMIAVCLLALIVELLNSAIEATVDRVSLERHPLSKNAKDMGSAAQFVALTVITVTWATILLG.

A helical membrane pass occupies residues 15–32 (ILNATGYSLAGFLAAFRG). E33 is a binding site for a divalent metal cation. A run of 3 helical transmembrane segments spans residues 35-55 (AFRQ…LLDV), 61-81 (ALMI…SAIE), and 102-122 (GSAA…TILL). Catalysis depends on E74, which acts as the Proton acceptor. E81 lines the a divalent metal cation pocket.

This sequence belongs to the bacterial diacylglycerol kinase family. Requires Mg(2+) as cofactor.

The protein localises to the cell inner membrane. It carries out the reaction a 1,2-diacyl-sn-glycerol + ATP = a 1,2-diacyl-sn-glycero-3-phosphate + ADP + H(+). Functionally, catalyzes the ATP-dependent phosphorylation of sn-l,2-diacylglycerol (DAG) to phosphatidic acid. Involved in the recycling of diacylglycerol produced as a by-product during membrane-derived oligosaccharide (MDO) biosynthesis. This chain is Diacylglycerol kinase (dgkA), found in Pseudomonas aeruginosa (strain ATCC 15692 / DSM 22644 / CIP 104116 / JCM 14847 / LMG 12228 / 1C / PRS 101 / PAO1).